We begin with the raw amino-acid sequence, 389 residues long: Transmembrane protease serine 11A (389 aa).

The Cytoplasmic segment spans residues 1–23 (MEVAGYGTHNRDLKQWMVTLLSA). A helical; Signal-anchor for type II membrane protein transmembrane segment spans residues 24–44 (LSLMMVVVTIGLLALFLVFDI). Positions 31 to 148 (VTIGLLALFL…SLVQVKDCGK (118 aa)) constitute an SEA domain. Over 45–389 (QVNSNSGQKS…RHWIASKTGL (345 aa)) the chain is Extracellular. The 231-residue stretch at 158–388 (IVSGNPAAKG…YRHWIASKTG (231 aa)) folds into the Peptidase S1 domain. The cysteines at positions 183 and 199 are disulfide-linked. Residues His198 and Asp243 each act as charge relay system in the active site. N-linked (GlcNAc...) asparagine glycosylation is present at Asn274. 2 cysteine pairs are disulfide-bonded: Cys308/Cys324 and Cys335/Cys364. Ser339 functions as the Charge relay system in the catalytic mechanism.

It belongs to the peptidase S1 family.

The protein localises to the membrane. Its function is as follows. Probable serine protease which may play a role in cellular senescence. Overexpression inhibits cell growth and induce G1 cell cycle arrest. The sequence is that of Transmembrane protease serine 11A (Tmprss11a) from Mus musculus (Mouse).